The following is a 303-amino-acid chain: NAC domain-containing protein 48 (303 aa).

Residues 9–159 (LPPGFRFHPT…DWVLCRIYNK (151 aa)) form the NAC domain.

Interacts with NAC071. As to expression, widely expressed.

It is found in the nucleus. Its function is as follows. Transcription activator that binds to the promoter of the stress response gene LEA19. Involved in tolerance to abiotic stresses. Transcription activator involved in response to abiotic and biotic stresses. Involved in drought and salt stress responses, and defense response to the rice blast fungus. Transcription activator involved tolerance to cold and salt stresses. Transcription activator involved in tolerance to drought stress. Targets directly and activates genes involved in membrane modification, nicotianamine (NA) biosynthesis, glutathione relocation, accumulation of phosphoadenosine phosphosulfate and glycosylation in roots. Controls root growth at early vegetative stage through chromatin modification and histone lysine deacytaltion by HDAC1. The polypeptide is NAC domain-containing protein 48 (Oryza sativa subsp. japonica (Rice)).